The primary structure comprises 375 residues: Succinyl-diaminopimelate desuccinylase (375 aa).

Residue His66 coordinates Zn(2+). Asp68 is a catalytic residue. Asp99 contributes to the Zn(2+) binding site. The active-site Proton acceptor is the Glu133. Glu134, Glu162, and His348 together coordinate Zn(2+).

This sequence belongs to the peptidase M20A family. DapE subfamily. As to quaternary structure, homodimer. The cofactor is Zn(2+). It depends on Co(2+) as a cofactor.

It carries out the reaction N-succinyl-(2S,6S)-2,6-diaminopimelate + H2O = (2S,6S)-2,6-diaminopimelate + succinate. The protein operates within amino-acid biosynthesis; L-lysine biosynthesis via DAP pathway; LL-2,6-diaminopimelate from (S)-tetrahydrodipicolinate (succinylase route): step 3/3. Its function is as follows. Catalyzes the hydrolysis of N-succinyl-L,L-diaminopimelic acid (SDAP), forming succinate and LL-2,6-diaminopimelate (DAP), an intermediate involved in the bacterial biosynthesis of lysine and meso-diaminopimelic acid, an essential component of bacterial cell walls. The polypeptide is Succinyl-diaminopimelate desuccinylase (Shigella flexneri serotype 5b (strain 8401)).